The sequence spans 285 residues: Probable endonuclease 4 (285 aa).

The Zn(2+) site is built by H69, H109, E145, D179, H182, H216, D229, H231, and E261.

This sequence belongs to the AP endonuclease 2 family. The cofactor is Zn(2+).

The enzyme catalyses Endonucleolytic cleavage to 5'-phosphooligonucleotide end-products.. In terms of biological role, endonuclease IV plays a role in DNA repair. It cleaves phosphodiester bonds at apurinic or apyrimidinic (AP) sites, generating a 3'-hydroxyl group and a 5'-terminal sugar phosphate. This is Probable endonuclease 4 from Cronobacter sakazakii (strain ATCC BAA-894) (Enterobacter sakazakii).